Reading from the N-terminus, the 475-residue chain is UDP-N-acetylmuramoylalanine--D-glutamate ligase (475 aa).

ATP is bound at residue 130 to 136; the sequence is GTNGKTT.

Belongs to the MurCDEF family.

Its subcellular location is the cytoplasm. It carries out the reaction UDP-N-acetyl-alpha-D-muramoyl-L-alanine + D-glutamate + ATP = UDP-N-acetyl-alpha-D-muramoyl-L-alanyl-D-glutamate + ADP + phosphate + H(+). Its pathway is cell wall biogenesis; peptidoglycan biosynthesis. Its function is as follows. Cell wall formation. Catalyzes the addition of glutamate to the nucleotide precursor UDP-N-acetylmuramoyl-L-alanine (UMA). The chain is UDP-N-acetylmuramoylalanine--D-glutamate ligase from Corynebacterium efficiens (strain DSM 44549 / YS-314 / AJ 12310 / JCM 11189 / NBRC 100395).